We begin with the raw amino-acid sequence, 381 residues long: Arf-GAP with dual PH domain-containing protein 2 (381 aa).

The Arf-GAP domain maps to 9–132 (KRLLELLQAA…TAIDKAVSHP (124 aa)). A C4-type zinc finger spans residues 25-48 (CADCGAADPDWASYKLGIFICLHC). PH domains follow at residues 132-233 (PGNR…AARL) and 255-361 (NYLK…GVLS).

It localises to the cytoplasm. The protein localises to the cell membrane. Its function is as follows. GTPase-activating protein for the ADP ribosylation factor family (Potential). Binds phosphatidylinositol 3,4,5-trisphosphate (PtdInsP3) and inositol 1,3,4,5-tetrakisphosphate (InsP4). Possesses a stoichiometry of two binding sites for InsP4 with identical affinity. The protein is Arf-GAP with dual PH domain-containing protein 2 (Adap2) of Mus musculus (Mouse).